Consider the following 151-residue polypeptide: Ubiquitin-conjugating enzyme E2 N (151 aa).

One can recognise a UBC core domain in the interval 3–149 (SLPRRIIKET…AREWTQKYAV (147 aa)). The active-site Glycyl thioester intermediate is the Cys-87.

Belongs to the ubiquitin-conjugating enzyme family.

It catalyses the reaction S-ubiquitinyl-[E1 ubiquitin-activating enzyme]-L-cysteine + [E2 ubiquitin-conjugating enzyme]-L-cysteine = [E1 ubiquitin-activating enzyme]-L-cysteine + S-ubiquitinyl-[E2 ubiquitin-conjugating enzyme]-L-cysteine.. Its pathway is protein modification; protein ubiquitination. In terms of biological role, catalyzes the covalent attachment of ubiquitin to other proteins. The protein is Ubiquitin-conjugating enzyme E2 N (ben) of Drosophila melanogaster (Fruit fly).